A 353-amino-acid polypeptide reads, in one-letter code: Heat-inducible transcription repressor HrcA (353 aa).

It belongs to the HrcA family.

Functionally, negative regulator of class I heat shock genes (grpE-dnaK-dnaJ and groELS operons). Prevents heat-shock induction of these operons. The chain is Heat-inducible transcription repressor HrcA from Anaeromyxobacter dehalogenans (strain 2CP-1 / ATCC BAA-258).